The primary structure comprises 753 residues: 5-methyltetrahydropteroyltriglutamate--homocysteine methyltransferase (753 aa).

5-methyltetrahydropteroyltri-L-glutamate is bound by residues 17 to 20 (RELK) and Lys-117. Residues 431–433 (IGS) and Glu-484 each bind L-homocysteine. L-methionine-binding positions include 431–433 (IGS) and Glu-484. 5-methyltetrahydropteroyltri-L-glutamate-binding positions include 515 to 516 (RC) and Trp-561. Asp-599 contributes to the L-homocysteine binding site. Asp-599 contributes to the L-methionine binding site. Residue Glu-605 participates in 5-methyltetrahydropteroyltri-L-glutamate binding. 3 residues coordinate Zn(2+): His-641, Cys-643, and Glu-665. Residue His-694 is the Proton donor of the active site. Position 726 (Cys-726) interacts with Zn(2+).

It belongs to the vitamin-B12 independent methionine synthase family. The cofactor is Zn(2+).

It catalyses the reaction 5-methyltetrahydropteroyltri-L-glutamate + L-homocysteine = tetrahydropteroyltri-L-glutamate + L-methionine. It participates in amino-acid biosynthesis; L-methionine biosynthesis via de novo pathway; L-methionine from L-homocysteine (MetE route): step 1/1. In terms of biological role, catalyzes the transfer of a methyl group from 5-methyltetrahydrofolate to homocysteine resulting in methionine formation. This chain is 5-methyltetrahydropteroyltriglutamate--homocysteine methyltransferase, found in Escherichia coli O7:K1 (strain IAI39 / ExPEC).